A 1979-amino-acid polypeptide reads, in one-letter code: MSQKPLSDDEKFLFVDKNFVNNPLAQADWSAKKLVWVPSEKHGFEAASIKEEKGDEVTVELQENGKKVTLSKDDIQKMNPPKFSKVEDMAELTCLNEASVLHNLRERYFSGLIYTYSGLFCVVINPYKQLPIYSEKIIDMYKGKKRHEMPPHIYAIADTAYRSMLQDREDQSILCTGESGAGKTENTKKVIQYLAVVASSHKGKKDTSITQGPSFSYGELEKQLLQANPILEAFGNAKTVKNDNSSRFGKFIRINFDVTGYIVGANIETYLLEKSRAIRQAKDERTFHIFYYLIAGASEQMRNDLLLEGFNNYTFLSNGHVPIPAQQDDEMFQETLEAMTIMGFTEEEQTSILRVVSSVLQLGNIVFKKERNTDQASMPDNTAAQKVCHLMGINVTDFTRSILTPRIKVGRDVVQKAQTKEQADFAIEALAKAKFERLFRWILTRVNKALDKTKRQGASFLGILDIAGFEIFEINSFEQLCINYTNEKLQQLFNHTMFILEQEEYQREGIEWNFIDFGLDLQPCIELIERPTNPPGVLALLDEECWFPKATDTSFVEKLIQEQGNHAKFQKSKQLKDKTEFCILHYAGKVTYNASAWLTKNMDPLNDNVTSLLNQSSDKFVADLWKDVDRIVGLDQMAKMTESSLPSASKTKKGMFRTVGQLYKEQLTKLMTTLRNTNPNFVRCIIPNHEKRAGKLDAHLVLEQLRCNGVLEGIRICRQGFPNRIVFQEFRQRYEILAANAIPKGFMDGKQACILMIKALELDPNLYRIGQSKIFFRTGVLAHLEEERDLKITDVIIAFQAQCRGYLARKAFAKRQQQLTAMKVIQRNCAAYLKLRNWQWWRLFTKVKPLLQVTRQEEEMQAKDEELQRTKERQQKAEAELKELEQKHTQLCEEKNLLQEKLQAETELYAEAEEMRVRLAAKKQELEEILHEMEARIEEEEERSQQLQAEKKKMQQQMLDLEEQLEEEEAARQKLQLEKVTADGKIKKMEDDILIMEDQNNKLTKERKLLEERVSDLTTNLAEEEEKAKNLTKLKNKHESMISELEVRLKKEEKSRQELEKIKRKLEGESSDLHEQIAELQAQIAELKAQLAKKEEELQAALARLEDETSQKNNALKKIRELESHISDLQEDLESEKAARNKAEKQKRDLSEELEALKTELEDTLDTTATQQELRAKREQEVTVLKRALEEETRTHEAQVQEMRQKHTQAVEELTEQLEQFKRAKANLDKTKQTLEKDNADLANEIRSLSQAKQDVEHKKKKLEVQLQDLQSKYSDGERVRTELNEKVHKLQIEVENVTSLLNEAESKNIKLTKDVATLGSQLQDTQELLQEETRQKLNVTTKLRQLEDDKNSLQEQLDEEVEAKQNLERHISTLTIQLSDSKKKLQEFTATVETMEEGKKKLQREIESLTQQFEEKAASYDKLEKTKNRLQQELDDLVVDLDNQRQLVSNLEKKQKKFDQMLAEEKNISSKYADERDRAEAEAREKETKALSLARALEEALEAKEELERTNKMLKAEMEDLVSSKDDVGKNVHELEKSKRTLEQQVEEMKTQLEELEDELQAAEDAKLRLEVNMQAMKSQFERDLQARDEQNEEKRRQLLKQLHEHETELEDERKQRALAAAAKKKLEVDVKDLESQVDSANKAREEAIKQLRKLQAQMKDYQRDLDDARAAREEIFATARENEKKAKNLEAELIQLQEDLAAAERARKQADLEKEEMAEELASANSGRTSLQDEKRRLEARIAQLEEELDEEHSNIETMSDRMRKAVQQAEQLNNELATERATAQKNENARQQLERQNKELRSKLQEMEGAVKSKFKSTIAALEAKIASLEEQLEQEAREKQAAAKTLRQKDKKLKDALLQVEDERKQAEQYKDQAEKGNLRLKQLKRQLEEAEEESQRINANRRKLQRELDEATESNDALGREVAALKSKLRRGNEPVSFAPPRRSGGRRVIENATDGGEEEIDGRDGDFNGKASE.

A Blocked amino end (Ser) modification is found at Ser-2. The Myosin N-terminal SH3-like domain occupies 30–80; sequence SAKKLVWVPSEKHGFEAASIKEEKGDEVTVELQENGKKVTLSKDDIQKMNP. In terms of domain architecture, Myosin motor spans 84-789; sequence SKVEDMAELT…VLAHLEEERD (706 aa). Lys-128 carries the N6,N6,N6-trimethyllysine modification. 177 to 184 lines the ATP pocket; the sequence is GESGAGKT. 2 actin-binding regions span residues 667–689 and 768–782; these read LTKLMTTLRNTNPNFVRCIIPNH and RIGQSKIFFRTGVLA. Residues 792 to 821 form the IQ domain; the sequence is ITDVIIAFQAQCRGYLARKAFAKRQQQLTA. The rodlike tail (S2 and LMM domains) stretch occupies residues 850–1979; it reads LLQVTRQEEE…DGDFNGKASE (1130 aa). Positions 850 to 1979 form a coiled coil; it reads LLQVTRQEEE…DGDFNGKASE (1130 aa). Disordered stretches follow at residues 1130–1150, 1709–1736, and 1891–1979; these read QEDLESEKAARNKAEKQKRDL, RKQADLEKEEMAEELASANSGRTSLQDE, and QLEE…KASE. Over residues 1135–1150 the composition is skewed to basic and acidic residues; it reads SEKAARNKAEKQKRDL. The span at 1968–1979 shows a compositional bias: basic and acidic residues; that stretch reads GRDGDFNGKASE.

This sequence belongs to the TRAFAC class myosin-kinesin ATPase superfamily. Myosin family. Muscle myosin is a hexameric protein that consists of 2 heavy chain subunits (MHC), 2 alkali light chain subunits (MLC) and 2 regulatory light chain subunits (MLC-2).

It localises to the cytoplasm. The protein resides in the myofibril. Muscle contraction. The polypeptide is Myosin-11 (MYH11) (Gallus gallus (Chicken)).